The chain runs to 381 residues: Cytosolic acyl coenzyme A thioester hydrolase (381 aa).

Residues 51 to 169 enclose the HotDog ACOT-type 1 domain; sequence LGHCVTMGRI…TLWYVPLSLK (119 aa). The active site involves Asn-67. Lys-169 and Lys-199 each carry N6-acetyllysine. The HotDog ACOT-type 2 domain occupies 225 to 339; that stretch reads SYSQSSLIHL…FFTYVSLNQE (115 aa). Asp-256 is an active-site residue. Lys-284 bears the N6-acetyllysine mark. Residues 342 to 381 form a disordered region; the sequence is PMPVPQLVPETEDEKKRFEEGKGRYLQMKAKRQGHTEPQP. Residues 354-364 are compositionally biased toward basic and acidic residues; sequence DEKKRFEEGKG.

In terms of assembly, homohexamer. In terms of tissue distribution, widely expressed with highest levels in brain. High levels also found in thymus, large intestine and testis. Negligible in muscle and adipose tissue. In the central and peripheral nervous systems, displays a predominantly neuronal localization with highest expression in cell bodies and neurites.

It localises to the cytoplasm. The protein resides in the cytosol. The enzyme catalyses hexadecanoyl-CoA + H2O = hexadecanoate + CoA + H(+). The catalysed reaction is dodecanoyl-CoA + H2O = dodecanoate + CoA + H(+). It carries out the reaction tetradecanoyl-CoA + H2O = tetradecanoate + CoA + H(+). It catalyses the reaction decanoyl-CoA + H2O = decanoate + CoA + H(+). The enzyme catalyses octanoyl-CoA + H2O = octanoate + CoA + H(+). The catalysed reaction is octadecanoyl-CoA + H2O = octadecanoate + CoA + H(+). It carries out the reaction (9Z)-octadecenoyl-CoA + H2O = (9Z)-octadecenoate + CoA + H(+). The protein operates within lipid metabolism; fatty acid metabolism. Catalyzes the hydrolysis of acyl-CoAs into free fatty acids and coenzyme A (CoASH), regulating their respective intracellular levels. Preferentially hydrolyzes palmitoyl-CoA, but has a broad specificity acting on other fatty acyl-CoAs with chain-lengths of C8-C18. May play an important physiological function in brain. In Mus musculus (Mouse), this protein is Cytosolic acyl coenzyme A thioester hydrolase (Acot7).